We begin with the raw amino-acid sequence, 479 residues long: tRNA-2-methylthio-N(6)-dimethylallyladenosine synthase (479 aa).

The region spanning lysine 6–serine 122 is the MTTase N-terminal domain. Residues cysteine 15, cysteine 51, cysteine 85, cysteine 172, cysteine 176, and cysteine 179 each contribute to the [4Fe-4S] cluster site. Residues arginine 158–glutamate 390 form the Radical SAM core domain. The TRAM domain occupies glutamine 393 to threonine 464.

This sequence belongs to the methylthiotransferase family. MiaB subfamily. In terms of assembly, monomer. [4Fe-4S] cluster is required as a cofactor.

Its subcellular location is the cytoplasm. It catalyses the reaction N(6)-dimethylallyladenosine(37) in tRNA + (sulfur carrier)-SH + AH2 + 2 S-adenosyl-L-methionine = 2-methylsulfanyl-N(6)-dimethylallyladenosine(37) in tRNA + (sulfur carrier)-H + 5'-deoxyadenosine + L-methionine + A + S-adenosyl-L-homocysteine + 2 H(+). In terms of biological role, catalyzes the methylthiolation of N6-(dimethylallyl)adenosine (i(6)A), leading to the formation of 2-methylthio-N6-(dimethylallyl)adenosine (ms(2)i(6)A) at position 37 in tRNAs that read codons beginning with uridine. This chain is tRNA-2-methylthio-N(6)-dimethylallyladenosine synthase, found in Rhodopirellula baltica (strain DSM 10527 / NCIMB 13988 / SH1).